A 141-amino-acid chain; its full sequence is Fluoride-specific ion channel FluC 1 (141 aa).

The next 4 helical transmembrane spans lie at 12–32 (LYALIAAGSVIGGCARYLVGV), 44–64 (WATLFVNVTGSFVIGFYAAIA), 79–99 (FVMTGICGGYTTFSGFSLETF), and 107–127 (ALAALINLGVSPMSWLVAVWL). Positions 86 and 89 each coordinate Na(+).

Belongs to the fluoride channel Fluc/FEX (TC 1.A.43) family.

It localises to the cell inner membrane. It catalyses the reaction fluoride(in) = fluoride(out). Its activity is regulated as follows. Na(+) is not transported, but it plays an essential structural role and its presence is essential for fluoride channel function. Functionally, fluoride-specific ion channel. Important for reducing fluoride concentration in the cell, thus reducing its toxicity. This chain is Fluoride-specific ion channel FluC 1, found in Rhodopseudomonas palustris (strain BisB18).